Consider the following 283-residue polypeptide: HTH-type transcriptional activator RhaR (283 aa).

The 99-residue stretch at 179–277 (DLLMAALGNS…GVTPRVWRQQ (99 aa)) folds into the HTH araC/xylS-type domain. 2 consecutive DNA-binding regions (H-T-H motif) follow at residues 196 to 217 (QHFC…RQQT) and 244 to 267 (ISEI…TRET).

Binds DNA as a dimer.

The protein localises to the cytoplasm. Activates expression of the rhaSR operon in response to L-rhamnose. The polypeptide is HTH-type transcriptional activator RhaR (Cronobacter sakazakii (strain ATCC BAA-894) (Enterobacter sakazakii)).